The sequence spans 24 residues: Heptapoietin A light chain (24 aa).

Heterodimer of a heavy and a light chain linked by disulfide bond(s).

HPTA is an acidic heparin-binding growth factor for hepatocytes. In Oryctolagus cuniculus (Rabbit), this protein is Heptapoietin A light chain.